The sequence spans 2662 residues: Centrosome-associated protein CEP250L1 (2662 aa).

2 coiled-coil regions span residues 1030–1248 and 1281–1719; these read KVHY…EEEE and ARTH…IDAQ.

It is found in the cytoplasm. The protein resides in the cytoskeleton. Its subcellular location is the microtubule organizing center. It localises to the centrosome. Part of the centrosome inner core complex. Plays a role in the formation and/or stabilization of the mitotic spindle. Required for proper nuclear segregation and DNA partitioning during cell division. The sequence is that of Centrosome-associated protein CEP250L1 from Toxoplasma gondii (strain ATCC 50611 / Me49).